The primary structure comprises 24 residues: Transaldolase (24 aa).

The protein belongs to the transaldolase family.

The protein resides in the cytoplasm. The catalysed reaction is D-sedoheptulose 7-phosphate + D-glyceraldehyde 3-phosphate = D-erythrose 4-phosphate + beta-D-fructose 6-phosphate. It functions in the pathway carbohydrate degradation; pentose phosphate pathway; D-glyceraldehyde 3-phosphate and beta-D-fructose 6-phosphate from D-ribose 5-phosphate and D-xylulose 5-phosphate (non-oxidative stage): step 2/3. Functionally, transaldolase is important for the balance of metabolites in the pentose-phosphate pathway. The sequence is that of Transaldolase from Capsicum annuum var. annuum (Red pepper).